A 110-amino-acid chain; its full sequence is uncharacterized protein (110 aa).

The N-terminal stretch at 1-16 is a signal peptide; that stretch reads MKKILLIASMTAGLTA. A lipid anchor (N-palmitoyl cysteine) is attached at Cys-17. Cys-17 carries the S-diacylglycerol cysteine lipid modification.

It localises to the cell membrane. This is an uncharacterized protein from Salmonella typhimurium (strain LT2 / SGSC1412 / ATCC 700720).